Consider the following 77-residue polypeptide: U-actitoxin-Avd12a (77 aa).

Residues 1-23 form the signal peptide; sequence MALFRMLFLCAVLVLLTSKEGMS. Residues 24–29 constitute a propeptide that is removed on maturation; it reads YEEPEN. The EGF-like domain maps to 31-73; sequence EGVACTGQYAESFCLNGGTCRYIQSIGEYYCICNGDYTGHRCE. Cystine bridges form between C35–C50, C44–C61, and C63–C72.

The protein belongs to the EGF domain peptide family.

The protein resides in the secreted. It localises to the nematocyst. In terms of biological role, has both toxic and EGF activity. Its EGF activity consists of rounding cells (morphological change) and inducing tyrosine phosphorylation of the EGFR in A431 cells, but with a lower potency that human EGF. The protein is U-actitoxin-Avd12a of Anemonia viridis (Snakelocks anemone).